Consider the following 379-residue polypeptide: Gonadotropin-releasing hormone II receptor (379 aa).

At 1–40 (MSAGNGTPWGSAVGEEAWAGSGVAVEGSELPTFSTAAKVR) the chain is on the extracellular side. Residues 41-60 (VGVTIVLFVSSAGGNLAVLW) traverse the membrane as a helical segment. The Cytoplasmic portion of the chain corresponds to 61 to 76 (SVTRPQPSQLRPSPVR). A helical membrane pass occupies residues 77-96 (TLFAHLAAADLLVTFVVMPL). Topologically, residues 97-114 (DATWNITVQWLAGDIACR) are extracellular. N-linked (GlcNAc...) asparagine glycosylation occurs at N101. A disulfide bond links C113 and C188. Residues 115 to 136 (TLMFLKLMAMYSAAFLPVVIGL) traverse the membrane as a helical segment. At 137-160 (DRQAAVLNPLGSRSGVRKLLGAAW) the chain is on the cytoplasmic side. Residues 161 to 178 (GLSFLLALPQLFLFHTVH) traverse the membrane as a helical segment. Residues 179 to 204 (RAGPVPFTQCVTKGSFKARWQETTYN) are Extracellular-facing. The helical transmembrane segment at 205-224 (LFTFCCLFLLPLIAMAICYS) threads the bilayer. Over 225–278 (RIVLSVSSPQTRKGSHAPAGEFALRRSFDNRPRVCLRALRLALLILLTFILCWT) the chain is Cytoplasmic. The chain crosses the membrane as a helical span at residues 279-297 (PYYLLGLWYWFSPTMLTEV). Residues 298–303 (PPSLSH) lie on the Extracellular side of the membrane. A helical membrane pass occupies residues 304-323 (ILFLFGLLNAPLDPLLYGAF). Residues 324–379 (TFGCRRGHQELSIDSSKEGSGRMLQQEIHALRQQEVQKTVTSRSAGETKGISITSI) are Cytoplasmic-facing.

Belongs to the G-protein coupled receptor 1 family. Post-translationally, phosphorylated on the C-terminal cytoplasmic tail.

It is found in the cell membrane. In terms of biological role, receptor for gonadotropin releasing hormone II (GnRH II). This receptor mediates its action by association with G proteins that activate a phosphatidylinositol-calcium second messenger system. The polypeptide is Gonadotropin-releasing hormone II receptor (GNRHR2) (Chlorocebus aethiops (Green monkey)).